Here is a 319-residue protein sequence, read N- to C-terminus: Inositol phosphoceramide mannosyltransferase 1 (319 aa).

A helical transmembrane segment spans residues 8–28 (LLLKGIPICGVILLILWGYSL). 2 N-linked (GlcNAc...) asparagine glycosylation sites follow: N115 and N198. 2 helical membrane-spanning segments follow: residues 211–231 (PTVF…KYLL) and 279–299 (VLFF…RVVF).

Belongs to the glycosyltransferase 32 family.

The protein resides in the golgi apparatus. It localises to the cis-Golgi network membrane. It is found in the trans-Golgi network membrane. With imt2 and imt3, is required for the synthesis of mannosyl phosphorylinositol ceramide (MIPC). Catalyzes the addition of mannosyl to phosphorylinositol ceramide (IPC). MIPC is essential for cell morphology, cell-surface distribution of ergosterol, localization for plasma-membrane transporters, and lipid-raft-mediated endocytosis of plasma membrane proteins to the vacuole. This is Inositol phosphoceramide mannosyltransferase 1 (imt1) from Schizosaccharomyces pombe (strain 972 / ATCC 24843) (Fission yeast).